A 217-amino-acid polypeptide reads, in one-letter code: LSM12 homolog A (217 aa).

Residues 9–78 (VNAVNDCFSI…CSNVQVIKEC (70 aa)) form the Sm domain. The region spanning 86-184 (QKLNLEQVKM…IIKQFFNTRP (99 aa)) is the AD domain. The tract at residues 185–217 (SPVPESGAAASTSSPSVSPTSSSLASGSPVPAN) is disordered. Over residues 190–217 (SGAAASTSSPSVSPTSSSLASGSPVPAN) the composition is skewed to low complexity.

This sequence belongs to the LSM12 family. As to quaternary structure, component of the Atx2-tyf activator complex, composed of Atx2, tyf, pAbp, Lsm12a. Interacts with tyf, Atx2 and pAbp.

Component of the Atx2-tyf activator complex which functions in the circadian pacemaker neurons to activate the TYF-dependent translation of per and maintain 24 hour periodicity in circadian behaviors. Within the Atx2-tyf complex, likely to function as a molecular adapter which stabilizes the interaction between Atx2 and the translational regulator tyf. This Drosophila melanogaster (Fruit fly) protein is LSM12 homolog A.